Here is a 299-residue protein sequence, read N- to C-terminus: Ubiquinol-cytochrome c reductase complex assembly factor 1 (299 aa).

The protein belongs to the CBP3 family. Interacts with UQCC2. Interacts with UQCC3. Forms a complex, named COMB/coordinator of mitochondrial CYTB biogenesis, composed of UQCC1, UQCC2, UQCC4, UQCC5 and UQCC6; stabilizes nascent cytochrome b/MT-CYB and promotes its membrane insertion. Forms a complex, named COMB/coordinator of mitochondrial CYTB biogenesis, composed of UQCC1, UQCC2, UQCC4, UQCC5 and UQCC6; stabilizes nascent cytochrome b/MT-CYB and promotes its membrane insertion. Forms a complex, named COMA, composed of UQCC1, UQCC2 and UQCC4; activates MT-CYB translation. Forms a complex, named COMC, composed of UQCC1, UQCC2; UQCC3 and UQCC4; mediates MT-CYB hemylation and association with the first nuclear-encoded CIII subunit UQCRQ.

Its subcellular location is the mitochondrion inner membrane. The protein resides in the cytoplasmic vesicle. Required for the assembly of the ubiquinol-cytochrome c reductase complex (mitochondrial respiratory chain complex III or cytochrome b-c1 complex). Involved in cytochrome b translation and/or stability. The chain is Ubiquinol-cytochrome c reductase complex assembly factor 1 (UQCC1) from Homo sapiens (Human).